Consider the following 99-residue polypeptide: Large ribosomal subunit protein bL21 (99 aa).

The protein belongs to the bacterial ribosomal protein bL21 family. In terms of assembly, part of the 50S ribosomal subunit. Contacts protein L20.

In terms of biological role, this protein binds to 23S rRNA in the presence of protein L20. This Mycoplasma mobile (strain ATCC 43663 / 163K / NCTC 11711) (Mesomycoplasma mobile) protein is Large ribosomal subunit protein bL21.